Reading from the N-terminus, the 544-residue chain is T-complex protein 1 subunit gamma (544 aa).

Residues cysteine 368 and cysteine 374 are joined by a disulfide bond. The interval 525-544 (SKKRGGNEPTNPAAMAQGQE) is disordered.

Belongs to the TCP-1 chaperonin family. As to quaternary structure, heterooligomeric complex of about 850 to 900 kDa that forms two stacked rings, 12 to 16 nm in diameter.

Its subcellular location is the cytoplasm. Functionally, molecular chaperone; assists the folding of proteins upon ATP hydrolysis. Known to play a role, in vitro, in the folding of actin and tubulin. The chain is T-complex protein 1 subunit gamma from Drosophila melanogaster (Fruit fly).